Consider the following 85-residue polypeptide: uncharacterized protein (85 aa).

A compositionally biased stretch (basic and acidic residues) spans 64 to 76; the sequence is DPPVRRSGGREQH. A disordered region spans residues 64–85; that stretch reads DPPVRRSGGREQHLAQVWRATS.

This is an uncharacterized protein from Mycobacterium bovis (strain ATCC BAA-935 / AF2122/97).